Here is a 1003-residue protein sequence, read N- to C-terminus: Translation initiation factor IF-2 (1003 aa).

The tract at residues 36 to 392 (SSTIEPPVVK…RQKRNEYESM (357 aa)) is disordered. A compositionally biased stretch (low complexity) spans 62–151 (AAKPAAAKPA…PKPAAAAKPA (90 aa)). Pro residues-rich tracts occupy residues 178 to 190 (DGMP…PAPK) and 213 to 230 (PRPG…PGGG). Gly residues-rich tracts occupy residues 231–243 (PRPQ…GGQR) and 255–271 (GNRG…GPRP). A compositionally biased stretch (low complexity) spans 273-286 (GGPRPQGGSRPQGG). Residues 329–372 (GKGGRGGQAGGGAGGGFNRGGGTGGGAGRGGRRGGTAGAFGRPG) are compositionally biased toward gly residues. Basic residues predominate over residues 376–385 (RRGRKSKRQK). The region spanning 498–670 (KRPPVVTVMG…VCLTADAELD (173 aa)) is the tr-type G domain. The interval 507–514 (GHVDHGKT) is G1. Residue 507 to 514 (GHVDHGKT) coordinates GTP. The G2 stretch occupies residues 532–536 (GITQG). Residues 557-560 (DTPG) form a G3 region. GTP is bound by residues 557 to 561 (DTPGH) and 611 to 614 (NKID). The interval 611–614 (NKID) is G4. Residues 647-649 (SAK) form a G5 region.

It belongs to the TRAFAC class translation factor GTPase superfamily. Classic translation factor GTPase family. IF-2 subfamily.

It localises to the cytoplasm. Its function is as follows. One of the essential components for the initiation of protein synthesis. Protects formylmethionyl-tRNA from spontaneous hydrolysis and promotes its binding to the 30S ribosomal subunits. Also involved in the hydrolysis of GTP during the formation of the 70S ribosomal complex. This Corynebacterium glutamicum (strain R) protein is Translation initiation factor IF-2.